Reading from the N-terminus, the 32-residue chain is Tail virion protein G9P (32 aa).

Residues phenylalanine 8–phenylalanine 24 traverse the membrane as a helical segment.

It belongs to the inovirus G9P protein family.

The protein resides in the virion. The protein localises to the host membrane. Its function is as follows. May initiate with G7P the virion concomitant assembly-budding process, by interacting with the packaging signal of the viral genome. The assembly-budding takes place at the host inner membrane. In turn, G7P and G9P are present at the end of the filamentous virion that emerges first from the bacterial host. The sequence is that of Tail virion protein G9P (IX) from Escherichia coli (Bacteriophage f1).